The following is a 192-amino-acid chain: MSDKPNAVSSHTTPDVPEVAATPELSTGICAGDYRAALRRHPAGVTVVTLDSGTGPVGFTATSFSSVSLEPPLVSFNIAETSSSINALKAAESLVIHLLGEHQQHLAQRFARSADQRFADESLWAVLDTGEPVLHGTPSWMRVKVDQLIPVGDHTLVIGLVTRVHAEEDDESAAAPLLYHEGKYYRPTPLGQ.

Positions 1–20 (MSDKPNAVSSHTTPDVPEVA) are disordered. FMN-binding positions include 60-63 (TATS), 77-84 (NIAETSSS), Ala111, and Arg117.

It belongs to the non-flavoprotein flavin reductase family.

It is found in the cytoplasm. It carries out the reaction FMNH2 + NAD(+) = FMN + NADH + 2 H(+). It functions in the pathway sulfur metabolism; dibenzothiophene degradation. An NADH:FMN oxidoreductase which supplies reduced FMN for the '4S' desulfurization pathway that removes covalently bound sulfur from dibenzothiophene (DBT) without breaking carbon-carbon bonds. Provides DszA and DszC (DBTO2-monooxygenase and DBT-monooxygenase respectively) with reduced flavin (FMN). This Rhodococcus erythropolis (Arthrobacter picolinophilus) protein is NADH:FMN oxidoreductase.